We begin with the raw amino-acid sequence, 260 residues long: Fibronectin type III domain-containing protein 5 (260 aa).

Residues 1-56 form a disordered region; sequence MQAARGGAGRPERPGRPGRGPERERERPPGAGAASPCAAPGLPAGGATIHPGSPSA. Basic and acidic residues predominate over residues 10–28; the sequence is RPERPGRPGRGPERERERP. Residues 29–56 show a composition bias toward low complexity; the sequence is PGAGAASPCAAPGLPAGGATIHPGSPSA. The Fibronectin type-III domain occupies 84–175; the sequence is APVNVTVRHL…EPVLFKTPRE (92 aa). N-linked (GlcNAc...) asparagine glycans are attached at residues N87 and N132. Residues 201–221 form a helical membrane-spanning segment; it reads GEVLIIVVVLFMWAGVIALFC. Positions 230–241 are enriched in basic and acidic residues; that stretch reads NEPNNNKEKTKS. The segment at 230–260 is disordered; that stretch reads NEPNNNKEKTKSASETSTPEHQGGGLLRSKI. A compositionally biased stretch (gly residues) spans 251–260; sequence QGGGLLRSKI. The Microbody targeting signal signature appears at 258–260; sequence SKI.

In terms of assembly, dimer; may exist in other oligomeric forms. In terms of processing, the extracellular domain is cleaved and released from the cell membrane. Post-translationally, N-Glycosylated. In terms of tissue distribution, widely expressed, with highest levels in heart. Very low expression, if any, in colon, pancreas and spleen.

Its subcellular location is the cell membrane. The protein localises to the peroxisome membrane. The protein resides in the secreted. Functionally, mediates beneficial effects of muscular exercise. Induces browning of white adipose tissue by stimulating UCP1 expression, at least in part, via the nuclear receptor PPARA. This is Fibronectin type III domain-containing protein 5 (FNDC5) from Homo sapiens (Human).